The following is a 234-amino-acid chain: NAD-dependent protein deacylase (234 aa).

In terms of domain architecture, Deacetylase sirtuin-type spans 1-234; it reads MKNLVILSGA…IEMASQEMLK (234 aa). Residue 9 to 28 coordinates NAD(+); that stretch reads GAGISAESGIKTFRDAGGLW. 2 residues coordinate substrate: Tyr53 and Arg56. 86-89 is an NAD(+) binding site; the sequence is QNVD. His104 acts as the Proton acceptor in catalysis. Residues 169-171 and Met217 contribute to the NAD(+) site; that span reads GTS.

The protein belongs to the sirtuin family. Class III subfamily.

It is found in the cytoplasm. It carries out the reaction N(6)-acetyl-L-lysyl-[protein] + NAD(+) + H2O = 2''-O-acetyl-ADP-D-ribose + nicotinamide + L-lysyl-[protein]. The catalysed reaction is N(6)-succinyl-L-lysyl-[protein] + NAD(+) + H2O = 2''-O-succinyl-ADP-D-ribose + nicotinamide + L-lysyl-[protein]. NAD-dependent lysine deacetylase and desuccinylase that specifically removes acetyl and succinyl groups on target proteins. Modulates the activities of several proteins which are inactive in their acylated form. This is NAD-dependent protein deacylase from Helicobacter pylori (strain J99 / ATCC 700824) (Campylobacter pylori J99).